The following is a 420-amino-acid chain: MNYQNEQNAYQMQNQENVPPMSYGYPMPTPEQFQKMSYGQNFQAPWDMQQQIQMFQQYHQNFQGGYSDPFTYQNQYAHQPKIVTVTLQDPQDLWKELHYLSNEQNVLNNGRKIFPALNYKVEHLNPESNYKVEILLRRMVPYQIQYSNGSWSRKNVQSKKTIAMKTEKVFVGEFTGQDIMRTGLDLSDVKVFNIGSDNKKKVTPYEEMSDAEKREYDTQYSKKKTSMLEVSNECKYIPVLIINEILPNQELRLVGEFENEITQFATVSSYKNHIVKALRTAANPTSRGDAKQEAVQVGKQWRSSNKSLLESLRPSMICTSVSTTAPSTNFHAPLQYPGTSSPSSNFAPMTPSTSFDSAYSSFNVTSSTPEQMCYNPIPSMSTDYSFCSFDSATSSPPLQPTATSPEASQNQIKLEMNQYM.

The segment at residues 93 to 291 (LWKELHYLSN…ANPTSRGDAK (199 aa)) is a DNA-binding region (T-box). The segment covering 395–412 (SPPLQPTATSPEASQNQI) has biased composition (polar residues). Positions 395–420 (SPPLQPTATSPEASQNQIKLEMNQYM) are disordered.

The protein resides in the nucleus. This chain is Putative T-box protein 33 (tbx-33), found in Caenorhabditis elegans.